The following is a 658-amino-acid chain: Sulfate transporter 3.1 (658 aa).

Topologically, residues 1 to 85 (MGTEDYTFPQ…RYNLKFFKSD (85 aa)) are cytoplasmic. The helical transmembrane segment at 86–106 (LIAGITIASLAIPQGISYAKL) threads the bilayer. Residues 107–108 (AN) lie on the Extracellular side of the membrane. A helical membrane pass occupies residues 109–129 (LPPILGLYSSFVPPLVYAVLG). Residues 130 to 133 (SSRD) are Cytoplasmic-facing. The helical transmembrane segment at 134–154 (LAVGTVAVASLLTGAMLSKEV) threads the bilayer. The Extracellular portion of the chain corresponds to 155–163 (DAEKDPKLY). Residues 164–184 (LHLAFTATFFAGVLEASLGIF) traverse the membrane as a helical segment. A topological domain (cytoplasmic) is located at residue arginine 185. Residues 186 to 206 (LGFIVDFLSHATIVGFMGGAA) form a helical membrane-spanning segment. Topologically, residues 207-245 (TVVSLQQLKGIFGLKHFTDSTDVISVMRSVFSQTHEWRW) are extracellular. A helical transmembrane segment spans residues 246–266 (ESGVLGCGFLFFLLSTRYFSI). The Cytoplasmic portion of the chain corresponds to 267–271 (KKPKF). The helical transmembrane segment at 272-292 (FWVAAMAPLTSVILGSLLVYF) threads the bilayer. Over 293–332 (THAERHGVQVIGDLKKGLNPLSGSDLIFTSPYMSTAVKTG) the chain is Extracellular. Residues 333–353 (LITGIIALAEGVAVGRSFAMF) form a helical membrane-spanning segment. Over 354–363 (KNYNIDGNKE) the chain is Cytoplasmic. The helical transmembrane segment at 364-384 (MIAFGMMNIVGSFTSCYLTTG) threads the bilayer. The Extracellular portion of the chain corresponds to 385-398 (PFSRSAVNYNAGCK). The helical transmembrane segment at 399–419 (TAMSNIVMAIAVMFTLLFLTP) threads the bilayer. Topologically, residues 420 to 425 (LFHYTP) are cytoplasmic. Residues 426 to 446 (LVVLSAIIISAMLGLIDYQAA) traverse the membrane as a helical segment. Over 447–464 (IHLWKVDKFDFLVCMSAY) the chain is Extracellular. Residues 465–485 (VGVVFGSVEIGLVVAVAISIA) form a helical membrane-spanning segment. Topologically, residues 486-658 (RLLLFVSRPK…ASKNEPWNNV (173 aa)) are cytoplasmic. The STAS domain occupies 513–637 (QYPSSRTVPG…LTVGEAVEAC (125 aa)).

The protein belongs to the SLC26A/SulP transporter (TC 2.A.53) family. As to expression, expressed only in leaves.

It localises to the membrane. In terms of biological role, h(+)/sulfate cotransporter that may play a role in the regulation of sulfate assimilation. In Arabidopsis thaliana (Mouse-ear cress), this protein is Sulfate transporter 3.1 (SULTR3;1).